The following is a 480-amino-acid chain: Glutamyl-tRNA(Gln) amidotransferase subunit A (480 aa).

Residues Lys-74 and Ser-149 each act as charge relay system in the active site. Ser-173 acts as the Acyl-ester intermediate in catalysis.

It belongs to the amidase family. GatA subfamily. In terms of assembly, heterotrimer of A, B and C subunits.

The catalysed reaction is L-glutamyl-tRNA(Gln) + L-glutamine + ATP + H2O = L-glutaminyl-tRNA(Gln) + L-glutamate + ADP + phosphate + H(+). Functionally, allows the formation of correctly charged Gln-tRNA(Gln) through the transamidation of misacylated Glu-tRNA(Gln) in organisms which lack glutaminyl-tRNA synthetase. The reaction takes place in the presence of glutamine and ATP through an activated gamma-phospho-Glu-tRNA(Gln). In Vesicomyosocius okutanii subsp. Calyptogena okutanii (strain HA), this protein is Glutamyl-tRNA(Gln) amidotransferase subunit A.